The primary structure comprises 166 residues: Kelch repeat protein B10 (166 aa).

Kelch repeat units follow at residues 25-76 and 77-129; these read TIFV…STFG and MLYF…KLNN.

The protein belongs to the poxviruses Kelch family.

The sequence is that of Kelch repeat protein B10 from Oryctolagus cuniculus (Rabbit).